Reading from the N-terminus, the 323-residue chain is Beta-ketoacyl-[acyl-carrier-protein] synthase III (323 aa).

Active-site residues include Cys113 and His250. An ACP-binding region spans residues Gln251–Arg255. Asn280 is a catalytic residue.

The protein belongs to the thiolase-like superfamily. FabH family. Homodimer.

The protein localises to the cytoplasm. It carries out the reaction malonyl-[ACP] + acetyl-CoA + H(+) = 3-oxobutanoyl-[ACP] + CO2 + CoA. The protein operates within lipid metabolism; fatty acid biosynthesis. Its function is as follows. Catalyzes the condensation reaction of fatty acid synthesis by the addition to an acyl acceptor of two carbons from malonyl-ACP. Catalyzes the first condensation reaction which initiates fatty acid synthesis and may therefore play a role in governing the total rate of fatty acid production. Possesses both acetoacetyl-ACP synthase and acetyl transacylase activities. Its substrate specificity determines the biosynthesis of branched-chain and/or straight-chain of fatty acids. The protein is Beta-ketoacyl-[acyl-carrier-protein] synthase III of Mesorhizobium japonicum (strain LMG 29417 / CECT 9101 / MAFF 303099) (Mesorhizobium loti (strain MAFF 303099)).